A 341-amino-acid polypeptide reads, in one-letter code: Cytoplasmic tRNA 2-thiolation protein 1 (341 aa).

Belongs to the TtcA family. CTU1/NCS6/ATPBD3 subfamily.

It localises to the cytoplasm. Its pathway is tRNA modification; 5-methoxycarbonylmethyl-2-thiouridine-tRNA biosynthesis. Its function is as follows. Plays a central role in 2-thiolation of mcm(5)S(2)U at tRNA wobble positions of tRNA(Lys), tRNA(Glu) and tRNA(Gln). Directly binds tRNAs and probably acts by catalyzing adenylation of tRNAs, an intermediate required for 2-thiolation. It is unclear whether it acts as a sulfurtransferase that transfers sulfur from thiocarboxylated URM1 onto the uridine of tRNAs at wobble position. This is Cytoplasmic tRNA 2-thiolation protein 1 from Aedes aegypti (Yellowfever mosquito).